The sequence spans 571 residues: Glutamate--tRNA ligase (571 aa).

Positions 75 to 88 are enriched in basic and acidic residues; it reads GGPREDVARDKEGL. The segment at 75-98 is disordered; that stretch reads GGPREDVARDKEGLKPLPGAEPGN. Residues 105–115 carry the 'HIGH' region motif; sequence PNPSGPLHIGH.

Belongs to the class-I aminoacyl-tRNA synthetase family. Glutamate--tRNA ligase type 2 subfamily.

It is found in the cytoplasm. It carries out the reaction tRNA(Glu) + L-glutamate + ATP = L-glutamyl-tRNA(Glu) + AMP + diphosphate. Functionally, catalyzes the attachment of glutamate to tRNA(Glu) in a two-step reaction: glutamate is first activated by ATP to form Glu-AMP and then transferred to the acceptor end of tRNA(Glu). The chain is Glutamate--tRNA ligase from Methanopyrus kandleri (strain AV19 / DSM 6324 / JCM 9639 / NBRC 100938).